Consider the following 368-residue polypeptide: tRNA N6-adenosine threonylcarbamoyltransferase (368 aa).

H108 and H112 together coordinate Fe cation. Substrate-binding positions include 149–153 (LVSGG), D183, G196, D200, and N301. D329 provides a ligand contact to Fe cation.

This sequence belongs to the KAE1 / TsaD family. It depends on Fe(2+) as a cofactor.

The protein localises to the cytoplasm. The catalysed reaction is L-threonylcarbamoyladenylate + adenosine(37) in tRNA = N(6)-L-threonylcarbamoyladenosine(37) in tRNA + AMP + H(+). Functionally, required for the formation of a threonylcarbamoyl group on adenosine at position 37 (t(6)A37) in tRNAs that read codons beginning with adenine. Is involved in the transfer of the threonylcarbamoyl moiety of threonylcarbamoyl-AMP (TC-AMP) to the N6 group of A37, together with TsaE and TsaB. TsaD likely plays a direct catalytic role in this reaction. The polypeptide is tRNA N6-adenosine threonylcarbamoyltransferase (Paenarthrobacter aurescens (strain TC1)).